The sequence spans 138 residues: Large ribosomal subunit protein uL13 (138 aa).

It belongs to the universal ribosomal protein uL13 family. As to quaternary structure, part of the 50S ribosomal subunit.

This protein is one of the early assembly proteins of the 50S ribosomal subunit, although it is not seen to bind rRNA by itself. It is important during the early stages of 50S assembly. This Picrophilus torridus (strain ATCC 700027 / DSM 9790 / JCM 10055 / NBRC 100828 / KAW 2/3) protein is Large ribosomal subunit protein uL13.